The following is a 293-amino-acid chain: Cytidine deaminase 8 (293 aa).

2 consecutive CMP/dCMP-type deaminase domains span residues 20–151 and 181–293; these read FTPQ…LISQ and EHCN…LHCK. 61–63 is a substrate binding site; it reads NVE. His-74 serves as a coordination point for Zn(2+). Glu-76 (proton donor) is an active-site residue. Residues Cys-107 and Cys-110 each coordinate Zn(2+).

This sequence belongs to the cytidine and deoxycytidylate deaminase family. In terms of assembly, homodimer. Zn(2+) serves as cofactor.

It carries out the reaction cytidine + H2O + H(+) = uridine + NH4(+). The catalysed reaction is 2'-deoxycytidine + H2O + H(+) = 2'-deoxyuridine + NH4(+). In terms of biological role, this enzyme scavenges exogenous and endogenous cytidine and 2'-deoxycytidine for UMP synthesis. The chain is Cytidine deaminase 8 (CDA8) from Arabidopsis thaliana (Mouse-ear cress).